Here is a 202-residue protein sequence, read N- to C-terminus: Peptide deformylase 2 (202 aa).

Fe cation-binding residues include cysteine 123 and histidine 165. The active site involves glutamate 166. Fe cation is bound at residue histidine 169.

This sequence belongs to the polypeptide deformylase family. It depends on Fe(2+) as a cofactor.

It carries out the reaction N-terminal N-formyl-L-methionyl-[peptide] + H2O = N-terminal L-methionyl-[peptide] + formate. Functionally, removes the formyl group from the N-terminal Met of newly synthesized proteins. Requires at least a dipeptide for an efficient rate of reaction. N-terminal L-methionine is a prerequisite for activity but the enzyme has broad specificity at other positions. The protein is Peptide deformylase 2 of Vibrio vulnificus (strain YJ016).